The chain runs to 397 residues: MDVLYSLAKTLKDARARIVEGTLYTNVADIVQQVNQVINSINGSTFQTGGIGNLPIRNWTFDFGTLGTTLLNLDANYVENARTTIDYFIDFVDSVCVDEIVRESQRNGIAPQSDSLRQLSNAKYKRINYDNESEYIENWNLQNRRQRTGYLLHKPNILPYNNSFTLTRSQPAHDNVCGTIWLNNGSEIEIAGFDSECALNAPGNIQEFEHVVPMRRVLNNATVSLLPYAPRLTQRAVIPTADGLNTWLFNPIILRPNNVQVEFLLNGQVITNYQARYGILAARNFDSIRISFQLVRPPNMTPGVAALFPVAAPFPNHATVGLTLKIESASCESVLSDANEPYLSIVTGLRQEYAIPVGPVFPAGMNWTELLNNYSASREDNLQRIFTAASIRSMIIK.

The tract at residues 62–73 is interaction with the inner capsid protein VP2; sequence DFGTLGTTLLNL. His153 contributes to the Zn(2+) binding site. 2 residues coordinate Ca(2+): Asn266 and Asp286.

This sequence belongs to the rotavirus VP6 family. Homotrimer. Interacts with the inner capsid protein VP2. Interacts with the outer capsid glycoprotein VP7. Interacts with the outer capsid protein VP5*. Post-translationally, the N-terminus is blocked. In terms of processing, sumoylated with SUMO1 and SUMO2. Sumoylation of viral proteins seems to have a positive role on viral replication.

The protein resides in the virion. Intermediate capsid protein that self assembles to form an icosahedral capsid with a T=13 symmetry, which consists of 230 trimers of VP6, with channels at each of its five-fold vertices. This capsid constitutes the middle concentric layer of the viral mature particle. The innermost VP2 capsid and the intermediate VP6 capsid remain intact following cell entry to protect the dsRNA from degradation and to prevent unfavorable antiviral responses in the host cell during all the replication cycle of the virus. Nascent transcripts are transcribed within the structural confines of this double-layered particle (DLP) and are extruded through the channels at the five-fold axes. VP6 is required for the transcription activity of the DLP. In Rotavirus A (strain RVA/Turkey/Ireland/Ty-1/1978/G7P[17]) (RV-A), this protein is Intermediate capsid protein VP6.